Here is a 507-residue protein sequence, read N- to C-terminus: Transcription factor SOX-9 (507 aa).

Disordered stretches follow at residues 1 to 67 and 160 to 250; these read MNLL…SEED and RLRV…AGKV. A compositionally biased stretch (low complexity) spans 30–41; it reads SAGSPCPSGSGS. Residues 42–52 show a composition bias toward polar residues; that stretch reads DTENTRPQENT. 2 stretches are compositionally biased toward basic and acidic residues: residues 56 to 67 and 160 to 174; these read GEPDLKKESEED and RLRV…DYKY. The segment at 63-103 is dimerization (DIM); that stretch reads ESEEDKFPVCIREAVSQVLKGYDWTLVPMPVRVNGSSKNKP. The tract at residues 63–103 is PQA; it reads ESEEDKFPVCIREAVSQVLKGYDWTLVPMPVRVNGSSKNKP. Residue Ser-64 is modified to Phosphoserine. The HMG box DNA-binding region spans 105–173; it reads VKRPMNAFMV…QHKKDHPDYK (69 aa). Ser-211 is modified (phosphoserine). Residues 224 to 307 are transactivation domain (TAM); it reads PGEHSGQSQG…LPPNGHPGVP (84 aa). 2 consecutive short sequence motifs (9aaTAD) follow at residues 275 to 284 and 290 to 298; these read IGELSSDVIS and DVNEFDQYL. Residues 335 to 429 are disordered; it reads WMSKQQAPPP…PFNLPHYNPS (95 aa). Over residues 341 to 369 the composition is skewed to pro residues; the sequence is APPPPPQQPPQAPQAPQAPPQQQAPPQPQ. The span at 378–420 shows a compositional bias: polar residues; it reads HTLTTLSSEPGQSQRTHIKTEQLSPSHYSEQQQHSPQQISYSP. The segment at 392–507 is transactivation domain (TAC); the sequence is RTHIKTEQLS…QPVYTQLTRP (116 aa). A Glycyl lysine isopeptide (Lys-Gly) (interchain with G-Cter in ubiquitin) cross-link involves residue Lys-396. The 9aaTAD 3 signature appears at 458–466; sequence SGLYSTFTY. Residues 477-507 are disordered; sequence PIADTSGVPSIPQTHSPQHWEQPVYTQLTRP. The segment covering 483–507 has biased composition (polar residues); sequence GVPSIPQTHSPQHWEQPVYTQLTRP.

As to quaternary structure, homodimer; homodimerization is required for activity. Interacts (via C-terminus) with ZNF219; forming a complex that binds to the COL2A1 promoter and activates COL2A1 expression. Interacts with DDRGK1. Interacts with EP300/p300. Interacts with beta-catenin (CTNNB1); inhibiting CTNNB1 activity by competing with the binding sites of TCF/LEF within CTNNB1. In terms of processing, acetylated; acetylation impairs nuclear localization and ability to transactivate expression of target genes. Deacetylated by SIRT1. Phosphorylation at Ser-64 and Ser-211 by PKA increases transcriptional activity and may help delay chondrocyte maturation downstream of PTHLH/PTHrP signaling. Phosphorylation at either Ser-64 or Ser-211 is required for sumoylation, but phosphorylation is not dependent on sumoylation. Phosphorylated on tyrosine residues; tyrosine dephosphorylation by PTPN11/SHP2 blocks SOX9 phosphorylation by PKA and subsequent SUMOylation. Post-translationally, sumoylated; phosphorylation at either Ser-64 or Ser-211 is required for sumoylation. Sumoylation is induced by BMP signaling pathway. In terms of processing, ubiquitinated; ubiquitination leads to proteasomal degradation and is negatively regulated by DDRGK1.

It localises to the nucleus. Its function is as follows. Transcription factor that plays a key role in chondrocytes differentiation and skeletal development. Specifically binds the 5'-ACAAAG-3' DNA motif present in enhancers and super-enhancers and promotes expression of genes important for chondrogenesis, including cartilage matrix protein-coding genes COL2A1, COL4A2, COL9A1, COL11A2 and ACAN, SOX5 and SOX6. Also binds to some promoter regions. Plays a central role in successive steps of chondrocyte differentiation. Absolutely required for precartilaginous condensation, the first step in chondrogenesis during which skeletal progenitors differentiate into prechondrocytes. Together with SOX5 and SOX6, required for overt chondrogenesis when condensed prechondrocytes differentiate into early stage chondrocytes, the second step in chondrogenesis. Later, required to direct hypertrophic maturation and block osteoblast differentiation of growth plate chondrocytes: maintains chondrocyte columnar proliferation, delays prehypertrophy and then prevents osteoblastic differentiation of chondrocytes by lowering beta-catenin (CTNNB1) signaling and RUNX2 expression. Also required for chondrocyte hypertrophy, both indirectly, by keeping the lineage fate of chondrocytes, and directly, by remaining present in upper hypertrophic cells and transactivating COL10A1 along with MEF2C. Low lipid levels are the main nutritional determinant for chondrogenic commitment of skeletal progenitor cells: when lipids levels are low, FOXO (FOXO1 and FOXO3) transcription factors promote expression of SOX9, which induces chondrogenic commitment and suppresses fatty acid oxidation. Mechanistically, helps, but is not required, to remove epigenetic signatures of transcriptional repression and deposit active promoter and enhancer marks at chondrocyte-specific genes. Acts in cooperation with the Hedgehog pathway-dependent GLI (GLI1 and GLI3) transcription factors. In addition to cartilage development, also acts as a regulator of proliferation and differentiation in epithelial stem/progenitor cells: involved in the lung epithelium during branching morphogenesis, by balancing proliferation and differentiation and regulating the extracellular matrix. Controls epithelial branching during kidney development. The protein is Transcription factor SOX-9 of Rattus norvegicus (Rat).